A 395-amino-acid chain; its full sequence is MQFVDEASIIVEAGKGGNGCLSFRREKYVPKGGPDGGDGGHGGSVYLIGDESLNTLIDFKYQRFYKAPNGQPGQGRQMSGRNGEDLHVKVPVGTTVIDEDTLEVIADVTEAGQVVLVAQAGRRGLGNIHFKSSTNRAPRKTTPGTEGERRNLRFEMKVMADVGLLGVPNAGKSTLIRAVSAAKPKVANYPFTTLVPNLGVVKLGTHEHFVMADVPGLIEGASDGAGLGLRFLKHLTRTRLLLHVVDVAPFDESDPVDSARAIAHELEQFSATLAERPRWLVLNKLDLLPEEERPSTVDDIVERLAWSGPVYKISAISGDGTQALVQAAHRWLTEQRQLEAEDETAFEHEREMRRRMEDEAVARAEARMSRKRKPAEDDDDDFDEDDYDVEVEYAP.

An Obg domain is found at 1-159 (MQFVDEASII…RNLRFEMKVM (159 aa)). Positions 128–147 (IHFKSSTNRAPRKTTPGTEG) are disordered. The OBG-type G domain occupies 160–333 (ADVGLLGVPN…LVQAAHRWLT (174 aa)). GTP is bound by residues 166–173 (GVPNAGKS), 191–195 (FTTLV), 213–216 (DVPG), 283–286 (NKLD), and 314–316 (SAI). Mg(2+) is bound by residues Ser173 and Thr193. Residues 340–368 (AEDETAFEHEREMRRRMEDEAVARAEARM) are compositionally biased toward basic and acidic residues. Positions 340-395 (AEDETAFEHEREMRRRMEDEAVARAEARMSRKRKPAEDDDDDFDEDDYDVEVEYAP) are disordered. Over residues 376–395 (EDDDDDFDEDDYDVEVEYAP) the composition is skewed to acidic residues.

The protein belongs to the TRAFAC class OBG-HflX-like GTPase superfamily. OBG GTPase family. In terms of assembly, monomer. It depends on Mg(2+) as a cofactor.

The protein resides in the cytoplasm. An essential GTPase which binds GTP, GDP and possibly (p)ppGpp with moderate affinity, with high nucleotide exchange rates and a fairly low GTP hydrolysis rate. Plays a role in control of the cell cycle, stress response, ribosome biogenesis and in those bacteria that undergo differentiation, in morphogenesis control. The chain is GTPase Obg from Chromohalobacter salexigens (strain ATCC BAA-138 / DSM 3043 / CIP 106854 / NCIMB 13768 / 1H11).